Reading from the N-terminus, the 339-residue chain is Phosphatidylglycerol--prolipoprotein diacylglyceryl transferase (339 aa).

A run of 3 helical transmembrane segments spans residues 43–63 (FTIA…YWLG), 81–101 (ILWM…LTSW), and 121–141 (NGGI…IYFA). Arg167 is a binding site for a 1,2-diacyl-sn-glycero-3-phospho-(1'-sn-glycerol). Transmembrane regions (helical) follow at residues 231–251 (FTQL…YFWL) and 300–320 (LWTD…WMLW).

This sequence belongs to the Lgt family.

The protein localises to the cell membrane. It catalyses the reaction L-cysteinyl-[prolipoprotein] + a 1,2-diacyl-sn-glycero-3-phospho-(1'-sn-glycerol) = an S-1,2-diacyl-sn-glyceryl-L-cysteinyl-[prolipoprotein] + sn-glycerol 1-phosphate + H(+). It participates in protein modification; lipoprotein biosynthesis (diacylglyceryl transfer). In terms of biological role, catalyzes the transfer of the diacylglyceryl group from phosphatidylglycerol to the sulfhydryl group of the N-terminal cysteine of a prolipoprotein, the first step in the formation of mature lipoproteins. This Deinococcus radiodurans (strain ATCC 13939 / DSM 20539 / JCM 16871 / CCUG 27074 / LMG 4051 / NBRC 15346 / NCIMB 9279 / VKM B-1422 / R1) protein is Phosphatidylglycerol--prolipoprotein diacylglyceryl transferase.